The chain runs to 355 residues: Protein RecA (355 aa).

67–74 (GPESSGKT) provides a ligand contact to ATP.

This sequence belongs to the RecA family.

It localises to the cytoplasm. In terms of biological role, can catalyze the hydrolysis of ATP in the presence of single-stranded DNA, the ATP-dependent uptake of single-stranded DNA by duplex DNA, and the ATP-dependent hybridization of homologous single-stranded DNAs. It interacts with LexA causing its activation and leading to its autocatalytic cleavage. This Shewanella piezotolerans (strain WP3 / JCM 13877) protein is Protein RecA.